The sequence spans 784 residues: MGDTTSSEDVPENKQKSLKFEIIDARMKIFKDIVKSKSSESVKEEQIYQKSLEFFDEDLKSSEESVSNEEIKTGSEKELEPLNVFDIILIMLQQLPERKKPIGSLLSKWILMNFMNWMQDKQSIMEQQMTEYYQKKAGLACVKEPKNEEYLLQIFKISKEFVIDLRKSKVQEYLENQKFKEAAEIVMKHEVVDDYSFEQITLPLILCDKVQIVDELLKISKKLQKSYISFLDQFVAETDETVNAFFEPYKEKGMVTINLSRFHGKSLTIFMQKFFNGQVKQFKFDLEERRDAPKFVANMKRKALKYFVGKRFEDHEMNDELFCEHMKSTLPECTDKTIVQFLILLWDTCIYERRIEALFWATYSNIDRNSKYMPPDLKEELENPTTEMKNGLEKLQALRTTKNCQEEDEQLYVFEEQKKYPIRIVQNEQDLEILLSELGELEEGMYIGYDSEFKPYHLIDVSTSRLAIIQLFFKDKAWLINCVAIDNLASRDDVWIRLYKGLFESNKFSIVGFDIRQDIEAMFTVPSINKNFKIENIQNVICVKSLAENVNALSMDILNLSTKTSKLSVLADHLVGLKMDKSEQCGNWQCRPLRRNQIIYAVMDAVAVFEVFQKIVEVVRKHELDAEKLLVESHMITVKKEKVRRDCKNISLIPWNEFYQIIHTHRNPEKPLQKPSELKIVVDTMVLGLGKNLRLLGFDVYIPRDVTELKEFLRKMDKMEESEQRLVISVPSRSYEMLKSDNPNAKFVLIPNIYEKVPIDLVCSFFDFFNIDISPDQDYIKLNC.

The 198-residue stretch at 422 to 619 (IRIVQNEQDL…EVFQKIVEVV (198 aa)) folds into the 3'-5' exonuclease domain.

This is an uncharacterized protein from Caenorhabditis elegans.